The sequence spans 323 residues: DNA-directed RNA polymerase subunit alpha (323 aa).

The tract at residues 1–233 is alpha N-terminal domain (alpha-NTD); that stretch reads MGQEKVTVST…DLFIPFFHAE (233 aa). The interval 264-323 is alpha C-terminal domain (alpha-CTD); that stretch reads IALKYIYIDQSELPPRVYNCLKRSNINTFLELLNNSQEELMKIQDFRIEDVKHILDVLEI.

This sequence belongs to the RNA polymerase alpha chain family. In terms of assembly, in plastids the minimal PEP RNA polymerase catalytic core is composed of four subunits: alpha, beta, beta', and beta''. When a (nuclear-encoded) sigma factor is associated with the core the holoenzyme is formed, which can initiate transcription.

Its subcellular location is the plastid. It localises to the chloroplast. The catalysed reaction is RNA(n) + a ribonucleoside 5'-triphosphate = RNA(n+1) + diphosphate. Its function is as follows. DNA-dependent RNA polymerase catalyzes the transcription of DNA into RNA using the four ribonucleoside triphosphates as substrates. This Morus indica (Mulberry) protein is DNA-directed RNA polymerase subunit alpha.